A 1043-amino-acid chain; its full sequence is Ack-related non-receptor tyrosine kinase (1043 aa).

Residues 113 to 379 (ITLCKELGQG…SDIVAKFPER (267 aa)) form the Protein kinase domain. Residues 119 to 127 (LGQGEFGSV) and lysine 146 contribute to the ATP site. The active-site Proton acceptor is the aspartate 241. The 66-residue stretch at 379–444 (RRAQSVRAVV…RPTDTVAHLG (66 aa)) folds into the SH3 domain. The disordered stretch occupies residues 443 to 481 (LGSEPPCSNGTIENGFSEKEKGGKKNKKAEKESERERKK). Residues 458 to 481 (FSEKEKGGKKNKKAEKESERERKK) are compositionally biased toward basic and acidic residues. Residues 484–498 (ISEPVGDVRHTCHVG) form the CRIB domain. Disordered stretches follow at residues 514–644 (MCPT…SAAN), 790–842 (KINE…GWSS), 859–898 (KQAS…LSVR), and 932–993 (LIDG…RQFP). The segment covering 516–543 (PTSSSPSTSRGSQASPAPSHTSSSTTSS) has biased composition (low complexity). The span at 610-624 (GNQHSVQVHDQFSSL) shows a compositional bias: polar residues. Residues 630–644 (SLTPTAPPLTASAAN) show a composition bias toward low complexity. The stretch at 785–812 (EQEVRKINEKSAREHRKTEDLLREERQK) forms a coiled coil. Residues 790-818 (KINEKSAREHRKTEDLLREERQKEQKPGE) show a composition bias toward basic and acidic residues. The segment covering 825–842 (PAESLYSTRTPQQEGWSS) has biased composition (polar residues). Positions 870 to 884 (PTSSRLSTLDRSSIS) are enriched in low complexity.

The protein belongs to the protein kinase superfamily. Tyr protein kinase family. Requires Mg(2+) as cofactor.

It carries out the reaction L-tyrosyl-[protein] + ATP = O-phospho-L-tyrosyl-[protein] + ADP + H(+). The catalysed reaction is L-seryl-[protein] + ATP = O-phospho-L-seryl-[protein] + ADP + H(+). The enzyme catalyses L-threonyl-[protein] + ATP = O-phospho-L-threonyl-[protein] + ADP + H(+). Functionally, probable tyrosine protein kinase which plays a role in vulva development, probably by acting as a negative regulator of the let-23/EGFR and let-60/ras pathway. Involved in the negative regulation of germline development. This Caenorhabditis elegans protein is Ack-related non-receptor tyrosine kinase.